The primary structure comprises 240 residues: uncharacterized protein (240 aa).

The segment at 3–27 (LKCLECDKLLSSIEMAEFHSTKTSH) adopts a C2H2-type zinc-finger fold. Disordered regions lie at residues 21-43 (HSTK…RSPE) and 120-171 (AEIE…RFSI). Residues 120–136 (AEIERDKKRRAAERENK) are compositionally biased toward basic and acidic residues. The span at 155–166 (SSSTCTRTPPTS) shows a compositional bias: low complexity.

This is an uncharacterized protein from Schizosaccharomyces pombe (strain 972 / ATCC 24843) (Fission yeast).